A 487-amino-acid chain; its full sequence is Serine/threonine-protein kinase 4 (487 aa).

M1 carries the N-acetylmethionine modification. Residue T3 is modified to Phosphothreonine. The region spanning 30 to 281 is the Protein kinase domain; sequence FDVLEKLGEG…ATQLLQHPFV (252 aa). Residues 36–44 and K59 contribute to the ATP site; that span reads LGEGSYGSV. Catalysis depends on D149, which acts as the Proton acceptor. A Phosphothreonine; by autocatalysis modification is found at T183. S265 is modified (phosphoserine). A coiled-coil region spans residues 290–310; sequence LRDLINEAMDVKLKRQESQQR. Residues 303-312 are compositionally biased toward basic and acidic residues; it reads KRQESQQREV. The disordered stretch occupies residues 303 to 332; the sequence is KRQESQQREVDQDDEENSEEDEMDSGTMVR. Acidic residues predominate over residues 313 to 326; sequence DQDDEENSEEDEMD. S320 is modified (phosphoserine). Phosphothreonine is present on residues T340 and T367. T387 carries the phosphothreonine; by PKB/AKT1 modification. Residues S410 and S414 each carry the phosphoserine modification. Y433 carries the post-translational modification Phosphotyrosine. Positions 433-480 constitute an SARAH domain; the sequence is YEFLKSWTVEDLQKRLLALDPMMEQEIEEIRQKYQSKRQPILDAIEAK.

This sequence belongs to the protein kinase superfamily. STE Ser/Thr protein kinase family. STE20 subfamily. Homodimer; mediated via the coiled-coil region. Interacts with NORE1, which inhibits autoactivation. Interacts with and stabilizes SAV1. Interacts with RASSF1. Interacts with FOXO3. Interacts with RASSF2 (via SARAH domain). Interacts with AR, PKB/AKT1, TNNI3 and SIRT1. Interacts with DLG5 (via PDZ domain 3). Interacts with MARK3 and SCRIB in the presence of DLG5. Mg(2+) serves as cofactor. In terms of processing, autophosphorylated on serine and threonine residues. Phosphorylation at Thr-387 by PKB/AKT1, leads to inhibition of its: kinase activity, nuclear translocation and autophosphorylation at Thr-183. It also diminishes its cleavage by caspases and its ability to phosphorylate FOXO3. Post-translationally, proteolytically cleaved by caspase-3 during apoptosis at Asp-326 and Asp-349 resulting in a 37 kDa or a 39 kDa subunit respectively. The 39 kDa subunit is further cleaved into the 37 kDa form. Proteolytic cleavage results in kinase activation and nuclear translocation of the truncated form (MST1/N). It is less likely that cleavage at Asp-349 is a prerequisite for activation as this site is not conserved in the murine ortholog.

The protein resides in the cytoplasm. It localises to the nucleus. It carries out the reaction L-seryl-[protein] + ATP = O-phospho-L-seryl-[protein] + ADP + H(+). The catalysed reaction is L-threonyl-[protein] + ATP = O-phospho-L-threonyl-[protein] + ADP + H(+). With respect to regulation, inhibited by the C-terminal non-catalytic region. Activated by caspase-cleavage. Full activation also requires homodimerization and autophosphorylation of Thr-183. Activated by RASSF1 which acts by preventing its dephosphorylation. Stress-activated, pro-apoptotic kinase which, following caspase-cleavage, enters the nucleus and induces chromatin condensation followed by internucleosomal DNA fragmentation. Key component of the Hippo signaling pathway which plays a pivotal role in organ size control and tumor suppression by restricting proliferation and promoting apoptosis. The core of this pathway is composed of a kinase cascade wherein STK3/MST2 and STK4/MST1, in complex with its regulatory protein SAV1, phosphorylates and activates LATS1/2 in complex with its regulatory protein MOB1, which in turn phosphorylates and inactivates YAP1 oncoprotein and WWTR1/TAZ. Phosphorylation of YAP1 by LATS2 inhibits its translocation into the nucleus to regulate cellular genes important for cell proliferation, cell death, and cell migration. STK3/MST2 and STK4/MST1 are required to repress proliferation of mature hepatocytes, to prevent activation of facultative adult liver stem cells (oval cells), and to inhibit tumor formation. Phosphorylates 'Ser-14' of histone H2B (H2BS14ph) during apoptosis. Phosphorylates FOXO3 upon oxidative stress, which results in its nuclear translocation and cell death initiation. Phosphorylates MOBKL1A, MOBKL1B and RASSF2. Phosphorylates TNNI3 (cardiac Tn-I) and alters its binding affinity to TNNC1 (cardiac Tn-C) and TNNT2 (cardiac Tn-T). Phosphorylates FOXO1 on 'Ser-212' and regulates its activation and stimulates transcription of PMAIP1 in a FOXO1-dependent manner. Phosphorylates SIRT1 and inhibits SIRT1-mediated p53/TP53 deacetylation, thereby promoting p53/TP53 dependent transcription and apoptosis upon DNA damage. Acts as an inhibitor of PKB/AKT1. Phosphorylates AR on 'Ser-650' and suppresses its activity by intersecting with PKB/AKT1 signaling and antagonizing formation of AR-chromatin complexes. The chain is Serine/threonine-protein kinase 4 (STK4) from Aotus nancymaae (Ma's night monkey).